The primary structure comprises 98 residues: Cytochrome c-552 (98 aa).

An N-terminal signal peptide occupies residues methionine 1–alanine 18. Heme c contacts are provided by cysteine 28, cysteine 31, histidine 32, and methionine 77.

This sequence belongs to the cytochrome c family. Binds 1 heme c group covalently per subunit.

Its function is as follows. Reacts with hydrogenase. In Hydrogenobacter thermophilus (strain DSM 6534 / IAM 12695 / TK-6), this protein is Cytochrome c-552.